The primary structure comprises 152 residues: Deoxyuridine 5'-triphosphate nucleotidohydrolase (152 aa).

Substrate-binding positions include Arg-71–Gly-73, Asn-84, Leu-88–Asp-90, and Met-98.

Belongs to the dUTPase family. The cofactor is Mg(2+).

It catalyses the reaction dUTP + H2O = dUMP + diphosphate + H(+). The protein operates within pyrimidine metabolism; dUMP biosynthesis; dUMP from dCTP (dUTP route): step 2/2. Functionally, this enzyme is involved in nucleotide metabolism: it produces dUMP, the immediate precursor of thymidine nucleotides and it decreases the intracellular concentration of dUTP so that uracil cannot be incorporated into DNA. This is Deoxyuridine 5'-triphosphate nucleotidohydrolase from Shewanella sediminis (strain HAW-EB3).